Reading from the N-terminus, the 115-residue chain is Regulator of ribonuclease activity B (115 aa).

The protein belongs to the RraB family. Interacts with the C-terminal region of Rne.

Its subcellular location is the cytoplasm. Functionally, globally modulates RNA abundance by binding to RNase E (Rne) and regulating its endonucleolytic activity. Can modulate Rne action in a substrate-dependent manner by altering the composition of the degradosome. This Aeromonas hydrophila subsp. hydrophila (strain ATCC 7966 / DSM 30187 / BCRC 13018 / CCUG 14551 / JCM 1027 / KCTC 2358 / NCIMB 9240 / NCTC 8049) protein is Regulator of ribonuclease activity B.